We begin with the raw amino-acid sequence, 57 residues long: Kunitz-type serine protease inhibitor (57 aa).

The region spanning 5–55 (CELAPSAGSCFGFVSSYYYNRYSNTCHSFTYSGCGKNANRFRTIDECNRTC) is the BPTI/Kunitz inhibitor domain. Cystine bridges form between Cys-5/Cys-55, Cys-14/Cys-38, and Cys-30/Cys-51.

It belongs to the venom Kunitz-type family. As to expression, expressed by the venom gland.

It is found in the secreted. Serine protease inhibitor that inhibits chymotrypsin. Also interacts with vasopressin V2 receptor (V2R/AVPR2). Inhibits vasopressin binding human V2R in the nanomolar range (Ki=7.87 nM), and also moderately inhibits vasopressin-induced cAMP production (IC(50)=208 nM). In vivo, intraperitoneal injection of this protein into rats increases diuresis by 1.6-fold, without any loss of electrolytes. The chain is Kunitz-type serine protease inhibitor from Naja naja (Indian cobra).